An 80-amino-acid polypeptide reads, in one-letter code: Pigment-dispersing hormone peptides (80 aa).

Positions 1-20 (MANYITIAIIVGIVCGQALS) are cleaved as a signal peptide. Residues 21 to 58 (VEDVDRNLLELNLPYGRGLDSELQLARLMLAAPRFCHP) constitute a propeptide that is removed on maturation. Ala78 is modified (alanine amide).

Belongs to the arthropod PDH family. Expressed in the brain (at protein level).

The protein localises to the secreted. Functionally, neuropeptide PDF is the main transmitter regulating circadian locomotor rhythms. In Camponotus floridanus (Florida carpenter ant), this protein is Pigment-dispersing hormone peptides.